The following is a 153-amino-acid chain: ADKAASGVLTKLPQKQIQEMKEAFSMIDVDRDGFVSKDDIKAISEQLGRTPDDKELTAMLKEAPGPLNFTMFLSDKLSGTDSEETIRNAFAMFDEQENKKLNIEYIKDLLEDMGNNFNKDEMRMTFKEAPVEGGKFDYVKFTAMIKGSGEDEA.

At Ala-1 the chain carries Blocked amino end (Ala). 2 consecutive EF-hand domains span residues 15-50 and 81-116; these read KQIQEMKEAFSMIDVDRDGFVSKDDIKAISEQLGRT and DSEETIRNAFAMFDEQENKKLNIEYIKDLLEDMGNN. Asp-28, Asp-30, Asp-32, and Asp-39 together coordinate Ca(2+).

In molluscan muscle, calcium regulation is associated with myosin rather than with actin. Muscle myosin contains two types of light chains: the catalytic light chain, essential for ATPase activity, and the regulatory light chain, a calcium-binding protein responsible for Ca(2+) dependent binding and Ca(2+) dependent Mg-ATPase activity. The polypeptide is Myosin regulatory light chain (Patinopecten sp. (Scallop)).